Consider the following 272-residue polypeptide: N-acetylmuramoyl-L-alanine amidase CwlA (272 aa).

Residues 24-142 (KAEYITIHNT…QDWNGKYCPH (119 aa)) enclose the N-acetylmuramoyl-L-alanine amidase domain.

It belongs to the N-acetylmuramoyl-L-alanine amidase 2 family.

The catalysed reaction is Hydrolyzes the link between N-acetylmuramoyl residues and L-amino acid residues in certain cell-wall glycopeptides.. In terms of biological role, autolysins are involved in some important biological processes such as cell separation, cell-wall turnover, competence for genetic transformation, formation of the flagella and sporulation. The chain is N-acetylmuramoyl-L-alanine amidase CwlA (cwlA) from Bacillus subtilis (strain 168).